Here is a 375-residue protein sequence, read N- to C-terminus: Queuine tRNA-ribosyltransferase (375 aa).

The active-site Proton acceptor is D89. Substrate contacts are provided by residues D89–F93, D143, Q187, and G214. Residues G245–D251 are RNA binding. D264 serves as the catalytic Nucleophile. Positions T269 to R273 are RNA binding; important for wobble base 34 recognition. Zn(2+)-binding residues include C302, C304, C307, and H333.

Belongs to the queuine tRNA-ribosyltransferase family. As to quaternary structure, homodimer. Within each dimer, one monomer is responsible for RNA recognition and catalysis, while the other monomer binds to the replacement base PreQ1. Zn(2+) is required as a cofactor.

The enzyme catalyses 7-aminomethyl-7-carbaguanine + guanosine(34) in tRNA = 7-aminomethyl-7-carbaguanosine(34) in tRNA + guanine. It functions in the pathway tRNA modification; tRNA-queuosine biosynthesis. Functionally, catalyzes the base-exchange of a guanine (G) residue with the queuine precursor 7-aminomethyl-7-deazaguanine (PreQ1) at position 34 (anticodon wobble position) in tRNAs with GU(N) anticodons (tRNA-Asp, -Asn, -His and -Tyr). Catalysis occurs through a double-displacement mechanism. The nucleophile active site attacks the C1' of nucleotide 34 to detach the guanine base from the RNA, forming a covalent enzyme-RNA intermediate. The proton acceptor active site deprotonates the incoming PreQ1, allowing a nucleophilic attack on the C1' of the ribose to form the product. After dissociation, two additional enzymatic reactions on the tRNA convert PreQ1 to queuine (Q), resulting in the hypermodified nucleoside queuosine (7-(((4,5-cis-dihydroxy-2-cyclopenten-1-yl)amino)methyl)-7-deazaguanosine). The protein is Queuine tRNA-ribosyltransferase of Salmonella paratyphi A (strain ATCC 9150 / SARB42).